Reading from the N-terminus, the 421-residue chain is Functional amyloid transporter FapF (421 aa).

Positions 1–24 are cleaved as a signal peptide; it reads MTQTLSLRAVLCATTLVSPFLAQA. A coiled-coil region spans residues 23-64; that stretch reads QAATESEVEALKKELLELRQRYEAQQNALMVLEQRVRQVEAQ.

Belongs to the amyloid transporter (TC 9.B.153) family.

The protein resides in the secreted. Its subcellular location is the cell surface. It localises to the cell outer membrane. Transports fibril components across the outer membrane. Upon overexpression of the endogenous six-gene locus (fapA-fapF), cells form large clumps during liquid growth, make large amounts of biofilm and produce amyloid fibrils. The polypeptide is Functional amyloid transporter FapF (Pseudomonas aeruginosa (strain ATCC 15692 / DSM 22644 / CIP 104116 / JCM 14847 / LMG 12228 / 1C / PRS 101 / PAO1)).